We begin with the raw amino-acid sequence, 949 residues long: MKTDLLACRHIGVNKADAEVMLRKIGVASLDELIDKTIPANIRLKAPLALPAPMTEYEFARHIAELAGKNKLFTTYIGMGWYNTITPAVIQRNVFENPVWYTSYTPYQTEVSQGRLEALMNFQTAVCDLTAMPLANCSLLDEATAAAEAVTMMYGLRSRNQQKAGANVVFIDENIFPQTLAVITTRAIPQGIEIRTGKFRDLEFTDDLFACVLQYPNANGNAEDYREFTEKAHTANCKVAVAADILSLALLTPPGEWGADIVFGTTQRLGTPMFYGGPSAGYFATRDEYKRNMPGRIIGWSKDKYGKLCYRMALQTREQHIKREKATSNICTAQALLATMAGFYTVYHGQEGIRNIASRIHSITVFLEKSIGKLGFKQVNKQYFDTLRFILPDSVSAQQIRTIALSKEVNLRYFDNGDVGLSIDETTDVAAANILLSIFAIAAGKDFQKVDDIPEATIISEELKRQTPYLTHEVFSKYHTETEMMRYIKRLDRKDISLAQSMISLGSCTMKLNAAAEMLPLSCAEFMCMHPLVPEDQAAGYRELIHNLSEELKVITGFAGVSLQPNSGAAGEYAGLRTIRAYLESIGQGHRNKVLIPASAHGTNPASAIQAGFTTVTCACDEHGNVDMDDLRAKAEENKDDLAALMITYPSTHGIFETEIVEICQIIHACGAQVYMDGANMNAQVGLTNPGFIGADVCHLNLHKTFASPHGGGGPGVGPICVAEHLVPFLPGHGLFGNSQNEVSAAPFGSAGILPITYGYIRMMGAEGLTMATKTAILNANYLAACLKDTYGIVYRGANGFVGHEMILECRKVYEETGISENDIAKRLMDYGYHAPTLSFPVHGTLMIEPTESESLSELDNFVLTMLTIWNEIQEVKNGEADKEDNVLINAPHPEYEVVSDQWEHCYTREKAAYPIESVRENKFWVNVARVDNTLGDRKLLPTCYGCFD.

Residue Lys704 is modified to N6-(pyridoxal phosphate)lysine.

The protein belongs to the GcvP family. The glycine cleavage system is composed of four proteins: P, T, L and H. Requires pyridoxal 5'-phosphate as cofactor.

The catalysed reaction is N(6)-[(R)-lipoyl]-L-lysyl-[glycine-cleavage complex H protein] + glycine + H(+) = N(6)-[(R)-S(8)-aminomethyldihydrolipoyl]-L-lysyl-[glycine-cleavage complex H protein] + CO2. In terms of biological role, the glycine cleavage system catalyzes the degradation of glycine. The P protein binds the alpha-amino group of glycine through its pyridoxal phosphate cofactor; CO(2) is released and the remaining methylamine moiety is then transferred to the lipoamide cofactor of the H protein. The chain is Glycine dehydrogenase (decarboxylating) from Bacteroides fragilis (strain ATCC 25285 / DSM 2151 / CCUG 4856 / JCM 11019 / LMG 10263 / NCTC 9343 / Onslow / VPI 2553 / EN-2).